The primary structure comprises 103 residues: MIGKEVTVQDFVLKLSEIQPEVLPVDLLCEEELPNEQETEEELDIERTVFKIVAPCGCSCCQVKLRLFVNATDSGIRTFQELLFRDLQLLCPECRGNCKHGGS.

Residues 1–45 form an E7 terminal domain region; it reads MIGKEVTVQDFVLKLSEIQPEVLPVDLLCEEELPNEQETEEELDI. Residues 27-31 carry the LXCXE motif; interaction with host RB1 and TMEM173/STING motif; that stretch reads LLCEE. A zinc finger spans residues 56-94; that stretch reads CGCSCCQVKLRLFVNATDSGIRTFQELLFRDLQLLCPEC. Positions 76–84 match the Nuclear export signal motif; that stretch reads IRTFQELLF.

It belongs to the papillomaviridae E7 protein family. As to quaternary structure, homodimer. Homooligomer. Interacts with host RB1; this interaction induces dissociation of RB1-E2F1 complex thereby disrupting RB1 activity. Interacts with host EP300; this interaction represses EP300 transcriptional activity. Interacts with protein E2; this interaction inhibits E7 oncogenic activity. Interacts with host TMEM173/STING; this interaction impairs the ability of TMEM173/STING to sense cytosolic DNA and promote the production of type I interferon (IFN-alpha and IFN-beta). In terms of processing, highly phosphorylated.

The protein resides in the host cytoplasm. It is found in the host nucleus. In terms of biological role, plays a role in viral genome replication by driving entry of quiescent cells into the cell cycle. Stimulation of progression from G1 to S phase allows the virus to efficiently use the cellular DNA replicating machinery to achieve viral genome replication. E7 protein has both transforming and trans-activating activities. Induces the disassembly of the E2F1 transcription factor from RB1, with subsequent transcriptional activation of E2F1-regulated S-phase genes. Interferes with host histone deacetylation mediated by HDAC1 and HDAC2, leading to transcription activation. Also plays a role in the inhibition of both antiviral and antiproliferative functions of host interferon alpha. Interaction with host TMEM173/STING impairs the ability of TMEM173/STING to sense cytosolic DNA and promote the production of type I interferon (IFN-alpha and IFN-beta). This Human papillomavirus type 8 protein is Protein E7.